Here is a 1264-residue protein sequence, read N- to C-terminus: P-type sodium-transporting ATPase4 (1264 aa).

Polar residues predominate over residues 1–12 (MSSQNNNKQGGQ). The segment at 1-102 (MSSQNNNKQG…INGEKNDDNN (102 aa)) is disordered. Composition is skewed to basic and acidic residues over residues 15-42 (NNKK…DELN) and 50-64 (NDMK…KKNE). 8 helical membrane-spanning segments follow: residues 165-185 (VWLI…LVAA), 186-206 (VASL…IVTL), 359-379 (GLIG…AVII), 393-413 (FVII…GLPM), 923-943 (FVCF…VAIV), 1006-1026 (IFEA…CTGF), 1203-1223 (CSIS…TSIL), and 1226-1246 (TCLL…NLFL).

This sequence belongs to the cation transport ATPase (P-type) (TC 3.A.3) family.

The protein resides in the cell membrane. The catalysed reaction is Na(+)(in) + ATP + H2O = Na(+)(out) + ADP + phosphate + H(+). Its activity is regulated as follows. Inhibited by cipargamin and other spiroindolone compounds. Inhibited by 4-cyano-3-methylisoquinoline derivatives MB14 and MB10 but not RK18. Inhibited by (+)-SJ733, a dihydroisoquinolone compound. In terms of biological role, sodium-exporting ATPase. Required for the extrusion of Na(+) from the intraerythrocytic parasites to maintain a low cytosolic concentration of Na(+). The polypeptide is P-type sodium-transporting ATPase4 (Plasmodium falciparum (isolate 3D7)).